Consider the following 422-residue polypeptide: MDKFRVQGRTRLSGEVTISGAKNAALPILFAALLAEDPVELQNVPKLKDIDTTIKLLSQLGVKIERDAASGSVFVDASGVDEFCAPYDLVKTMRASIWALGPLVARFGKGQVSLPGGCAIGARPVDLHITGLEQLSAEIKLEEGYVKASVNGRLKAAHIVMDKVSVGATVTIMSAATLAEGTTVIENAAREPEIVDTANFLNTLGAKITGAGTDRITIEGVARLGGGVYRVLPDRIETGTFLVAAAISGGKVVCRQTRPDTLDAVLAKLREAGADIEVGDDWISLDMHGKRPKAVTLRTAPHPGFPTDMQAQFSLLNLVAEGTGVITETIFENRFMHVPELIRMGAHAEIESNTVICYGVEQLSGAQVMATDLRASASLVLAGCIADGVTIVDRIYHIDRGYEGIEDKLRALGAKIERVKGE.

Residue 22-23 participates in phosphoenolpyruvate binding; it reads KN. Position 94 (arginine 94) interacts with UDP-N-acetyl-alpha-D-glucosamine. Cysteine 118 acts as the Proton donor in catalysis. Cysteine 118 carries the 2-(S-cysteinyl)pyruvic acid O-phosphothioketal modification. UDP-N-acetyl-alpha-D-glucosamine is bound by residues 123-127, 163-166, aspartate 308, and isoleucine 330; these read RPVDL and KVSV.

The protein belongs to the EPSP synthase family. MurA subfamily.

It localises to the cytoplasm. It catalyses the reaction phosphoenolpyruvate + UDP-N-acetyl-alpha-D-glucosamine = UDP-N-acetyl-3-O-(1-carboxyvinyl)-alpha-D-glucosamine + phosphate. It participates in cell wall biogenesis; peptidoglycan biosynthesis. Cell wall formation. Adds enolpyruvyl to UDP-N-acetylglucosamine. The polypeptide is UDP-N-acetylglucosamine 1-carboxyvinyltransferase (Yersinia enterocolitica serotype O:8 / biotype 1B (strain NCTC 13174 / 8081)).